We begin with the raw amino-acid sequence, 490 residues long: Aspartyl/glutamyl-tRNA(Asn/Gln) amidotransferase subunit B (490 aa).

Belongs to the GatB/GatE family. GatB subfamily. In terms of assembly, heterotrimer of A, B and C subunits.

It catalyses the reaction L-glutamyl-tRNA(Gln) + L-glutamine + ATP + H2O = L-glutaminyl-tRNA(Gln) + L-glutamate + ADP + phosphate + H(+). It carries out the reaction L-aspartyl-tRNA(Asn) + L-glutamine + ATP + H2O = L-asparaginyl-tRNA(Asn) + L-glutamate + ADP + phosphate + 2 H(+). Allows the formation of correctly charged Asn-tRNA(Asn) or Gln-tRNA(Gln) through the transamidation of misacylated Asp-tRNA(Asn) or Glu-tRNA(Gln) in organisms which lack either or both of asparaginyl-tRNA or glutaminyl-tRNA synthetases. The reaction takes place in the presence of glutamine and ATP through an activated phospho-Asp-tRNA(Asn) or phospho-Glu-tRNA(Gln). The protein is Aspartyl/glutamyl-tRNA(Asn/Gln) amidotransferase subunit B of Burkholderia ambifaria (strain MC40-6).